We begin with the raw amino-acid sequence, 189 residues long: Probable nicotinate-nucleotide adenylyltransferase (189 aa).

This sequence belongs to the NadD family.

It carries out the reaction nicotinate beta-D-ribonucleotide + ATP + H(+) = deamido-NAD(+) + diphosphate. It participates in cofactor biosynthesis; NAD(+) biosynthesis; deamido-NAD(+) from nicotinate D-ribonucleotide: step 1/1. Its function is as follows. Catalyzes the reversible adenylation of nicotinate mononucleotide (NaMN) to nicotinic acid adenine dinucleotide (NaAD). In Hydrogenobaculum sp. (strain Y04AAS1), this protein is Probable nicotinate-nucleotide adenylyltransferase.